We begin with the raw amino-acid sequence, 315 residues long: D-alanine--D-alanine ligase (315 aa).

Residues 101-297 enclose the ATP-grasp domain; that stretch reads KHIFRSLNID…FNELVKIIIE (197 aa). 128–181 contributes to the ATP binding site; the sequence is KIDYPYVLKPINEGSSIGVYIIFSHEDYLELKNNSSTIMEKMIVEEYIPGIELH. Residues Asp249, Glu263, and Asn265 each coordinate Mg(2+).

This sequence belongs to the D-alanine--D-alanine ligase family. The cofactor is Mg(2+). Mn(2+) is required as a cofactor.

It localises to the cytoplasm. It carries out the reaction 2 D-alanine + ATP = D-alanyl-D-alanine + ADP + phosphate + H(+). It participates in cell wall biogenesis; peptidoglycan biosynthesis. Functionally, cell wall formation. In Wolbachia pipientis wMel, this protein is D-alanine--D-alanine ligase.